Here is a 331-residue protein sequence, read N- to C-terminus: Ribosomal RNA small subunit methyltransferase H (331 aa).

S-adenosyl-L-methionine is bound by residues 38 to 40 (GGY), Asp-56, Phe-83, Asp-100, and Gln-107. A disordered region spans residues 289–331 (AELAENPRARSARLRVGVRTDAPAGKVDPQALGTPLIPKKGRR).

The protein belongs to the methyltransferase superfamily. RsmH family.

The protein resides in the cytoplasm. It carries out the reaction cytidine(1402) in 16S rRNA + S-adenosyl-L-methionine = N(4)-methylcytidine(1402) in 16S rRNA + S-adenosyl-L-homocysteine + H(+). Its function is as follows. Specifically methylates the N4 position of cytidine in position 1402 (C1402) of 16S rRNA. In Cereibacter sphaeroides (strain ATCC 17029 / ATH 2.4.9) (Rhodobacter sphaeroides), this protein is Ribosomal RNA small subunit methyltransferase H.